Consider the following 638-residue polypeptide: Neuroendocrine convertase 2 (638 aa).

The first 25 residues, 1 to 25 (MKGGCVSQWKAAAGFLFCVMVFASA), serve as a signal peptide directing secretion. Positions 26-109 (ERPVFTNHFL…QQEGFDRKKR (84 aa)) are excised as a propeptide. Residues 129 to 453 (QWYLINTGQA…YGVLDAGAMV (325 aa)) form the Peptidase S8 domain. Active-site charge relay system residues include Asp-167 and His-208. Cystine bridges form between Cys-225–Cys-376 and Cys-317–Cys-347. Asn-375 carries N-linked (GlcNAc...) asparagine glycosylation. Ser-384 functions as the Charge relay system in the catalytic mechanism. Residues 461–597 (TVPERFHCVG…TLMLHGTQSA (137 aa)) enclose the P/Homo B domain. The cysteines at positions 468 and 494 are disulfide-linked. Residues Asn-514 and Asn-524 are each glycosylated (N-linked (GlcNAc...) asparagine).

The protein belongs to the peptidase S8 family. Furin subfamily.

Its subcellular location is the cytoplasmic vesicle. It localises to the secretory vesicle. The protein resides in the secreted. It carries out the reaction Release of protein hormones and neuropeptides from their precursors, generally by hydrolysis of -Lys-Arg-|- bonds.. Its function is as follows. Serine endopeptidase which is involved in the processing of hormone and other protein precursors at sites comprised of pairs of basic amino acid residues. Responsible for the release of glucagon from proglucagon in pancreatic A cells. In Homo sapiens (Human), this protein is Neuroendocrine convertase 2 (PCSK2).